Consider the following 71-residue polypeptide: Small ribosomal subunit protein bS21 (71 aa).

The tract at residues 39–71 is disordered; the sequence is EKPTQERKRKAAAAVKRQLRRSSRDVTKRQRLY. The segment covering 45 to 59 has biased composition (basic residues); sequence RKRKAAAAVKRQLRR. A compositionally biased stretch (basic and acidic residues) spans 60–71; the sequence is SSRDVTKRQRLY.

This sequence belongs to the bacterial ribosomal protein bS21 family.

In Stenotrophomonas maltophilia (strain K279a), this protein is Small ribosomal subunit protein bS21.